The primary structure comprises 256 residues: 1-(5-phosphoribosyl)-5-[(5-phosphoribosylamino)methylideneamino] imidazole-4-carboxamide isomerase (256 aa).

Residue Asp-9 is the Proton acceptor of the active site. Asp-130 (proton donor) is an active-site residue.

Belongs to the HisA/HisF family.

The protein localises to the cytoplasm. It catalyses the reaction 1-(5-phospho-beta-D-ribosyl)-5-[(5-phospho-beta-D-ribosylamino)methylideneamino]imidazole-4-carboxamide = 5-[(5-phospho-1-deoxy-D-ribulos-1-ylimino)methylamino]-1-(5-phospho-beta-D-ribosyl)imidazole-4-carboxamide. It participates in amino-acid biosynthesis; L-histidine biosynthesis; L-histidine from 5-phospho-alpha-D-ribose 1-diphosphate: step 4/9. In Prochlorococcus marinus (strain SARG / CCMP1375 / SS120), this protein is 1-(5-phosphoribosyl)-5-[(5-phosphoribosylamino)methylideneamino] imidazole-4-carboxamide isomerase.